Reading from the N-terminus, the 481-residue chain is Glutamate--tRNA ligase 1 (481 aa).

A 'HIGH' region motif is present at residues 11 to 21 (PSPTGSLHIGG). The 'KMSKS' region signature appears at 244-248 (KLSKR). K247 contacts ATP.

This sequence belongs to the class-I aminoacyl-tRNA synthetase family. Glutamate--tRNA ligase type 1 subfamily. In terms of assembly, monomer.

The protein resides in the cytoplasm. It catalyses the reaction tRNA(Glu) + L-glutamate + ATP = L-glutamyl-tRNA(Glu) + AMP + diphosphate. Catalyzes the attachment of glutamate to tRNA(Glu) in a two-step reaction: glutamate is first activated by ATP to form Glu-AMP and then transferred to the acceptor end of tRNA(Glu). The protein is Glutamate--tRNA ligase 1 of Caldanaerobacter subterraneus subsp. tengcongensis (strain DSM 15242 / JCM 11007 / NBRC 100824 / MB4) (Thermoanaerobacter tengcongensis).